Here is a 354-residue protein sequence, read N- to C-terminus: Protein-glutamate methylesterase/protein-glutamine glutaminase 2 (354 aa).

Residues 5–122 (RVLIVDDSAL…SLKIKEVAEE (118 aa)) form the Response regulatory domain. 4-aspartylphosphate is present on Asp56. Residues 159 to 354 (PDTSFKKLIL…IADRIVELVR (196 aa)) form the CheB-type methylesterase domain. Residues Ser172, His199, and Asp298 contribute to the active site.

Belongs to the CheB family. Phosphorylated by CheA. Phosphorylation of the N-terminal regulatory domain activates the methylesterase activity.

Its subcellular location is the cytoplasm. The catalysed reaction is [protein]-L-glutamate 5-O-methyl ester + H2O = L-glutamyl-[protein] + methanol + H(+). It catalyses the reaction L-glutaminyl-[protein] + H2O = L-glutamyl-[protein] + NH4(+). Involved in chemotaxis. Part of a chemotaxis signal transduction system that modulates chemotaxis in response to various stimuli. Catalyzes the demethylation of specific methylglutamate residues introduced into the chemoreceptors (methyl-accepting chemotaxis proteins or MCP) by CheR. Also mediates the irreversible deamidation of specific glutamine residues to glutamic acid. In Carboxydothermus hydrogenoformans (strain ATCC BAA-161 / DSM 6008 / Z-2901), this protein is Protein-glutamate methylesterase/protein-glutamine glutaminase 2.